A 261-amino-acid chain; its full sequence is Aquaporin-8 (261 aa).

Topologically, residues 1–36 are cytoplasmic; it reads MSGETPMCSIDLSEVKAKETRMAGRFRVSWYEQYIQ. Residues 37–57 traverse the membrane as a helical segment; it reads PCVVELLGSALFIFIGCLSVI. Cysteine 53 is modified (cysteine persulfide). Cysteine 53 carries the cysteine sulfenic acid (-SOH) modification. The Extracellular portion of the chain corresponds to 58–84; the sequence is ENSPDTGLLQPALAHGLALGLIIATLG. The chain crosses the membrane as a helical span at residues 85 to 105; it reads NISGGHFNPAVSLAVTVIGGL. Positions 92-94 match the NPA 1 motif; sequence NPA. Residues 106-107 are Cytoplasmic-facing; that stretch reads KT. A helical membrane pass occupies residues 108–128; sequence MLLIPYWISQIFGGLIGAALA. Residues 129-156 lie on the Extracellular side of the membrane; that stretch reads KVVSPEERFWNASGAAFAIVQEQEQVTE. Asparagine 139 carries an N-linked (GlcNAc...) asparagine glycan. The helical transmembrane segment at 157–177 threads the bilayer; the sequence is ALGVEIILTILLVLAVCMGAV. Residues 178–183 are Cytoplasmic-facing; sequence NEKTMG. The chain crosses the membrane as a helical span at residues 184-204; that stretch reads PLAPFSIGFSVIVDILAGGGI. Residues 205–228 lie on the Extracellular side of the membrane; sequence SGACMNPARAFGPAVVAGYWDFHW. Residues 210-212 carry the NPA 2 motif; the sequence is NPA. A helical membrane pass occupies residues 229 to 249; the sequence is IYWLGPLLAGLFVGLLIRLFI. At 250–261 the chain is on the cytoplasmic side; the sequence is GDEKTRLILKSR.

It belongs to the MIP/aquaporin (TC 1.A.8) family. In terms of processing, sulfenylation at Cys-53(C53-SOH) when hydrogen peroxide flows through the AQP8 channel, making it susceptible to hydrogen sulfide produced by CBS. Persulfidation at Cys-53 is required to gate AQP8 channel; under stress condition, hydrogen peroxide accumulates in the cell leading to CBS activation that produces hydrogen sulfide inducing persulfidation of oxidized Cys-53 (C53-SOH). Post-translationally, N-glycosylated.

The protein resides in the cell membrane. It is found in the mitochondrion inner membrane. Its subcellular location is the apical cell membrane. It localises to the basolateral cell membrane. The protein localises to the smooth endoplasmic reticulum membrane. The catalysed reaction is H2O(in) = H2O(out). The enzyme catalyses H2O2(out) = H2O2(in). It carries out the reaction formamide(out) = formamide(in). It catalyses the reaction methylamine(out) = methylamine(in). Its activity is regulated as follows. Reversibly gated by a two-step sulfenylation-persulfidation process in cells undergoing diverse stresses. Channel that allows the facilitated permeation of water and uncharged molecules, such as hydrogen peroxide and the neutral form of ammonia (NH3), through cellular membranes such as plasma membrane, inner mitochondrial membrane and endoplasmic reticulum membrane of several tissues. The transport of ammonia neutral form induces a parallel transport of proton, at alkaline pH when the concentration of ammonia is high. However, it is unclear whether the transport of proton takes place via the aquaporin or via an endogenous pathway. Also, may transport ammonia analogs such as formamide and methylamine, a transport favourited at basic pH due to the increase of unprotonated (neutral) form, which is expected to favor diffusion. Does not transport urea or glycerol. The water transport mechanism is mercury- and copper-sensitive and passive in response to osmotic driving forces. At the canicular plasma membrane, mediates the osmotic transport of water toward the bile canaliculus and facilitates the cAMP-induced bile canalicular water secretion, a process involved in bile formation. In addition, mediates the hydrogen peroxide release from hepatocyte mitochondria that modulates the SREBF2-mediated cholesterol synthesis and facilitates the mitochondrial ammonia uptake which is metabolized into urea, mainly under glucagon stimulation. In B cells, transports the CYBB-generated hydrogen peroxide from the external leaflet of the plasma membrane to the cytosol to promote B cell activation and differentiation for signal amplification. In the small intestine and colon system, mediates water transport through mitochondria and apical membrane of epithelial cells. May play an important role in the adaptive response of proximal tubule cells to acidosis possibly facilitating mitochondrial ammonia transport. The polypeptide is Aquaporin-8 (Notomys alexis (Spinifex hopping mouse)).